A 348-amino-acid chain; its full sequence is Protein RecA (348 aa).

69 to 76 provides a ligand contact to ATP; sequence GPESSGKT.

This sequence belongs to the RecA family.

It localises to the cytoplasm. In terms of biological role, can catalyze the hydrolysis of ATP in the presence of single-stranded DNA, the ATP-dependent uptake of single-stranded DNA by duplex DNA, and the ATP-dependent hybridization of homologous single-stranded DNAs. It interacts with LexA causing its activation and leading to its autocatalytic cleavage. The polypeptide is Protein RecA (Gluconacetobacter polyoxogenes (Acetobacter polyoxogenes)).